Reading from the N-terminus, the 514-residue chain is Xylose import ATP-binding protein XylG (514 aa).

ABC transporter domains are found at residues 7-246 (FEMR…VGRE) and 263-508 (LEAR…IHAE). 39 to 46 (GENGAGKS) provides a ligand contact to ATP.

Belongs to the ABC transporter superfamily. Xylose importer (TC 3.A.1.2.4) family. As to quaternary structure, the complex is composed of two ATP-binding proteins (XylG), two transmembrane proteins (XylH) and a solute-binding protein (XylF).

It localises to the cell inner membrane. It carries out the reaction D-xylose(out) + ATP + H2O = D-xylose(in) + ADP + phosphate + H(+). Its function is as follows. Part of the ABC transporter complex XylFGH involved in xylose import. Responsible for energy coupling to the transport system. The chain is Xylose import ATP-binding protein XylG from Ralstonia nicotianae (strain ATCC BAA-1114 / GMI1000) (Ralstonia solanacearum).